The chain runs to 208 residues: Small ribosomal subunit protein uS4 (208 aa).

Positions 98-158 constitute an S4 RNA-binding domain; sequence GRLDNVVYRM…EKSKKQARIK (61 aa).

This sequence belongs to the universal ribosomal protein uS4 family. As to quaternary structure, part of the 30S ribosomal subunit. Contacts protein S5. The interaction surface between S4 and S5 is involved in control of translational fidelity.

In terms of biological role, one of the primary rRNA binding proteins, it binds directly to 16S rRNA where it nucleates assembly of the body of the 30S subunit. Functionally, with S5 and S12 plays an important role in translational accuracy. This is Small ribosomal subunit protein uS4 from Actinobacillus pleuropneumoniae serotype 5b (strain L20).